The chain runs to 75 residues: MPQSSRYSDEHVERLLTELVSVLERNRTPTDLSLMVLGNMVTNLINTSISPAQRRHIADSFAHALKSSVNEDKAH.

It belongs to the UPF0352 family.

This is UPF0352 protein plu2871 from Photorhabdus laumondii subsp. laumondii (strain DSM 15139 / CIP 105565 / TT01) (Photorhabdus luminescens subsp. laumondii).